The primary structure comprises 242 residues: Potassium/proton antiporter CemA (242 aa).

2 helical membrane passes run 116–136 (IIFC…YSIL) and 200–220 (ISGF…YLIF).

The protein belongs to the CemA family.

The protein resides in the plastid. It localises to the chloroplast inner membrane. It catalyses the reaction K(+)(in) + H(+)(out) = K(+)(out) + H(+)(in). Functionally, contributes to K(+)/H(+) antiport activity by supporting proton efflux to control proton extrusion and homeostasis in chloroplasts in a light-dependent manner to modulate photosynthesis. Prevents excessive induction of non-photochemical quenching (NPQ) under continuous-light conditions. Indirectly promotes efficient inorganic carbon uptake into chloroplasts. The sequence is that of Potassium/proton antiporter CemA from Chloranthus spicatus (Chulantree).